The sequence spans 65 residues: Disintegrin VLO4 (65 aa).

The 65-residue stretch at 1-65 (MNSGNPCCDP…PDCPRNPWKG (65 aa)) folds into the Disintegrin domain. Intrachain disulfides connect C7–C30, C21–C27, C26–C51, and C39–C58. A Cell attachment site motif is present at residues 43 to 45 (RGD).

The protein belongs to the disintegrin family. Dimeric disintegrin subfamily. In terms of assembly, homodimer; disulfide-linked. Expressed by the venom gland.

The protein localises to the secreted. Poor inhibitor of platelet aggregation. The disintegrin inhibits the adhesion of cells expressing the RGD-dependent integrin alpha-5/beta-1 (ITGA5/ITGB1) to immobilized fibronectin. Inhibition on alpha-2b/beta-3 (ITGA2B/ITGB3) is low. In Macrovipera lebetina obtusa (Levant blunt-nosed viper), this protein is Disintegrin VLO4.